A 255-amino-acid polypeptide reads, in one-letter code: Ribosomal RNA small subunit methyltransferase G (255 aa).

Residues G89, F94, 112 to 114 (DST), 140 to 141 (VE), and R159 contribute to the S-adenosyl-L-methionine site.

It belongs to the methyltransferase superfamily. RNA methyltransferase RsmG family.

It localises to the cytoplasm. Its function is as follows. Specifically methylates the N7 position of a guanine in 16S rRNA. The sequence is that of Ribosomal RNA small subunit methyltransferase G from Trichodesmium erythraeum (strain IMS101).